The chain runs to 519 residues: Circadian clock oscillator protein KaiC (519 aa).

One can recognise a KaiC 1 domain in the interval 1-247; that stretch reads MTSAEMTSPN…TITDHGINIF (247 aa). The ATP site is built by Gly-49, Thr-50, Gly-51, Lys-52, Thr-53, and Leu-54. Position 53 (Thr-53) interacts with Mg(2+). Glu-77 serves as the catalytic Proton acceptor in CI (KaiC 1). Ser-89 is an ATP binding site. Residues 115 to 122 form a B-loop, required to bind KaiB and SasA region; sequence QEVVGGFD. Lys-224, Leu-225, Arg-226, Thr-228, His-230, Thr-240, and Asp-241 together coordinate ATP. Residues 248–260 are linker; sequence PLGAMRLTQRSSN. In terms of domain architecture, KaiC 2 spans 261-519; sequence VRVSSGVVRL…RGVQEKGPES (259 aa). 7 residues coordinate ATP: Thr-290, Gly-291, Thr-292, Gly-293, Lys-294, Thr-295, and Leu-296. Thr-295 provides a ligand contact to Mg(2+). Mg(2+) is bound at residue Glu-318. Residue Glu-318 is the Proton acceptor in CII (KaiC 2) of the active site. Trp-331 serves as a coordination point for ATP. Ser-431 carries the post-translational modification Phosphoserine; by autocatalysis. The residue at position 432 (Thr-432) is a Phosphothreonine; by autocatalysis. Residues Arg-451, Lys-457, Met-458, Arg-459, Ser-461, His-463, and Lys-465 each coordinate ATP. Residues 488–497 form an A-loop, interacts with KaiA region; sequence RIISGSPTRI.

It belongs to the KaiC family. In terms of assembly, homohexamer resembling 2 stacked donuts with a central pore nearly blocked on one side; hexamerization is dependent on ATP-binding. Binds 12 ATP; 6 between each subunit in both layers. KaiB only binds to phospho-Ser-431 KaiC (not doubly phosphorylated KaiC). Complex formation between KaiB and KaiC is regulated by the phosphorylation state of KaiC and by an ATP hydrolysis-driven conformation change in the CI ring of KaiC; complex formation is slow. Slow complex formation is crucial for the timing of the circadian period. KaiB switches to a thioredoxin-like form called KaiB(fs) when bound to KaiC. The KaiABC complex composition changes during the circadian cycle to control KaiC phosphorylation. Complexes KaiC(6), KaiA(2-4):KaiC(6), KaiB(6):KaiC(6) and KaiC(6):KaiB(6):KaiA(12) are among the most important forms, many form cooperatively. Interacts directly with KaiB and SasA. The CI domain binds to KaiB and SasA; as they have a similar fold they compete for the same site on CI. CikA interacts with this protein in the clock complex. Binds to the C-terminus of KaiA via a coiled-coil structure. Forms KaiC(6):KaiB(1) and KaiC(6):KaiB(6) complexes. Requires Mg(2+) as cofactor. In terms of processing, has a 4 step phosphorylation cycle; the autokinase acts first on Thr-432, then Ser-431. When Ser-431 is modified KaiC switches to an autophosphatase mode, acting first on phospho-Thr-432 then phospho-Ser-431. Phosphorylated and dephosphorylated on serine/threonine residues by autocatalysis. Unphosphorylated, mono- and di-phosphorylated forms exist. The phosphorylated form correlates with clock speed. The presence of KaiA increases phosphorylation and stabilizes these forms. Post-translationally, phosphorylated on serine and threonine residues by autocatalysis. Has a 4 step phosphorylation cycle; the autokinase acts first on Thr-432, then Ser-431. When Ser-431 is modified KaiC switches to an autophosphatase mode, acting first on phospho-Thr-432 then phospho-Ser-431.

It carries out the reaction L-seryl-[protein] + ATP = O-phospho-L-seryl-[protein] + ADP + H(+). It catalyses the reaction L-threonyl-[protein] + ATP = O-phospho-L-threonyl-[protein] + ADP + H(+). The enzyme catalyses ATP + H2O = ADP + phosphate + H(+). With respect to regulation, interaction with KaiA stimulates autophosphorylation, KaiC interaction with KaiB sequesters KaiA, preventing it stimulating the KaiC kinase, leading to autodephosphorylation. A KaiA dimer is sufficient to enhance KaiC phosphorylation. Interaction of KaiA with the A-loop stimulates autokinase activity. The KaiABC oscillator complex constitutes the main circadian regulator in cyanobacteria. Complex composition changes during the circadian cycle to control KaiC phosphorylation; KaiA stimulates KaiC autophosphorylation, while KaiB sequesters KaiA, leading to KaiC autodephosphorylation. The Kai complex controls chromosome condensation, leading to a transcription accessible chromosome during the first half of the circadian cycle and a compact, less transcription-accessible chromosome during the latter half. Clock output pathways impact the RpaA transcriptional regulator. Circadian oscillations can be generated in vitro by incubating KaiA, KaiB and KaiC with 1 mM ATP. The cycle is self-sustainable for at least 3 cycles and resistant to temperature changes. Mutations in KaiC alone prolong or reduce the circadian rhythm. A very robust clock is reconstituted with KaiA, KaiB, KaiC, SasA, CikA and RpaA; output is measured by transcription from an appropriate reporter. Functionally, the level of KaiC phosphorylation and KaiC ATPase activity represent the key features of the biochemical oscillator. KaiA homodimer binding to the KaiC CII domain stimulates KaiC's ATPase activity and forms KaiA(2-4):KaiC(6) complexes, which stimulate KaiC autophosphorylation first on Thr-432 then Ser-431. Phospho-Ser-431-KaiC accumulation triggers binding of KaiB to CI to form the KaiB(6):KaiC(6) complex, leading to changes in the output regulators CikA and SasA. KaiB(6):KaiC(6) formation exposes a site for KaiA binding that sequesters KaiA from the CII domain, making the KaiC(6):KaiB(6):KaiA(12) complex that results in KaiC autodephosphorylation. Complete dephosphorylation of KaiC leads to dissociation of KaiA(2):KaiB(1), completing 1 cycle of the Kai oscillator. In terms of biological role, has a weak, temperature-independent ATPase activity (about 15 molecules of ATP per day); the addition of KaiA and KaiB increases activity slightly and makes the activity oscillate with a circadian period in vitro for over 60 hours. ATPase activity defines the circadian period. The phosphorylation state of KaiC modulates its ATPase activity and effects KaiB binding. Its function is as follows. There are several clock output pathways; SasA/RpaA, CikA/RpaA and LabA. KaiC enhances the autophosphorylation activity of SasA, which then transfers its phosphate group to RpaA to activate it. Phosphotransfer is maximal when KaiC phosphorylation is active during the circadian cycle. KaiB and KaiC together enhance the phosphatase activity of CikA on phospho-RpaA. KaiC is important for metabolic partitioning during the dark to light shift, modulating the balance between the Calvin cycle and oxidative pentose phosphate pathway under natural growth conditions. This is Circadian clock oscillator protein KaiC from Synechococcus elongatus (strain ATCC 33912 / PCC 7942 / FACHB-805) (Anacystis nidulans R2).